Consider the following 276-residue polypeptide: Protein FAM151B (276 aa).

It belongs to the menorin family.

Its function is as follows. Essential for survival of retinal photoreceptor cells. In Homo sapiens (Human), this protein is Protein FAM151B (FAM151B).